The following is a 331-amino-acid chain: MEVTGDAGVPESGEIRTLKPCLLRRNYSREQHGVAASCLEDLRSKACDILAIDKSLTPVTLVLAEDGTIVDDDDYFLCLPSNTKFVALASNEKWAYNNSDGGTAWISQESFDVDETDSGAGLKWKNVARQLKEDLSSIILLSEEDLQMLVDAPCSDLAQELRQSCATVQRLQHTLQQVLDQREEVRQSKQLLQLYLQALEKEGSLLSKQEESKAAFGEEVDAVDTGISRETSSDVALASHILTALREKQAPELSLSSQDLELVTKEDPKALAVALNWDIKKTETVQEACERELALRLQQTQSLHSLRSISASKASPPGDLQNPKRARQDPT.

Met1 carries the post-translational modification N-acetylmethionine. The 80-residue stretch at 17 to 96 (TLKPCLLRRN…ALASNEKWAY (80 aa)) folds into the CIDE-N domain. Phosphothreonine is present on Thr243. The tract at residues 305-331 (SLRSISASKASPPGDLQNPKRARQDPT) is disordered. A Phosphoserine modification is found at Ser315.

In terms of assembly, heterodimer of DFFA and DFFB. In terms of processing, caspase-3 cleaves DFF45 at 2 sites to generate an active factor.

Its subcellular location is the cytoplasm. Functionally, inhibitor of the caspase-activated DNase (DFF40). This Homo sapiens (Human) protein is DNA fragmentation factor subunit alpha (DFFA).